A 411-amino-acid polypeptide reads, in one-letter code: Serine hydroxymethyltransferase (411 aa).

(6S)-5,6,7,8-tetrahydrofolate is bound by residues L113 and 117–119; that span reads GHL. Position 222 is an N6-(pyridoxal phosphate)lysine (K222). 346–348 contacts (6S)-5,6,7,8-tetrahydrofolate; sequence SPF.

The protein belongs to the SHMT family. In terms of assembly, homodimer. It depends on pyridoxal 5'-phosphate as a cofactor.

The protein resides in the cytoplasm. The enzyme catalyses (6R)-5,10-methylene-5,6,7,8-tetrahydrofolate + glycine + H2O = (6S)-5,6,7,8-tetrahydrofolate + L-serine. The protein operates within one-carbon metabolism; tetrahydrofolate interconversion. It participates in amino-acid biosynthesis; glycine biosynthesis; glycine from L-serine: step 1/1. Functionally, catalyzes the reversible interconversion of serine and glycine with tetrahydrofolate (THF) serving as the one-carbon carrier. This reaction serves as the major source of one-carbon groups required for the biosynthesis of purines, thymidylate, methionine, and other important biomolecules. Also exhibits THF-independent aldolase activity toward beta-hydroxyamino acids, producing glycine and aldehydes, via a retro-aldol mechanism. In Prochlorococcus marinus (strain NATL2A), this protein is Serine hydroxymethyltransferase.